The chain runs to 659 residues: MRALVPMVVAATALASPAPALKPRLDDGLARTPQMGWNTYNQYNCFPNESIVHENAQALVDTGLADLGYRYVTIDCGWGVEDRLPNGTITWNPELFPQGFPAMGQYLHDLGLLFGVYGDSGILLCGSPPNITGSLYYEDIDARTFAEWGADSLKYDNCYSDAATNYPNVNYAPSTSPHPRFANMSRYIQAQDRDILFQVCEWGIDFPALWAPEIGHSWRIGNDIIPHWRSIFRTLNQAVPQTDFAGPGQWPDLDMLLVGLDGVLTVPEEQTHFSLWSILKSPLTIGAAIPGMRAESLEILSNADVIAFNQDALGVSAALRRRWSDEGYEVWSGPLEGGRTIAAVINWRDEDREITLDLPDIGLQYAETLQNVWADETVNGVKTSYSSVVEAHGVMLVQLAETVEEGVYPADVFAATNRDVTTFSDVYAITSSPNFVLNITLTEVTAAATNITIITDSSRRPISTSIPAGSSSISTSVSLIAGSNNTITIRNAPPLSSITLSPPEPTYYTGAQDFTLTSPAGAYTCPDAYCLPAGSKIVDLSTESAATAHINSSTSGSKYLEIDYINNEVAFDSSWGWGANSRNLTIKVNDNNPVRLEVPLSGRHSELFGPGLGWWDSGRLGVLTDGWIKGTNELVLSNEGGEGGFTKYAPDVVGIAVYD.

The N-terminal stretch at 1 to 20 (MRALVPMVVAATALASPAPA) is a signal peptide. Asn-48, Asn-86, and Asn-130 each carry an N-linked (GlcNAc...) asparagine glycan. Cys-125 and Cys-158 form a disulfide bridge. Asp-156 (nucleophile) is an active-site residue. Asn-183 carries an N-linked (GlcNAc...) asparagine glycan. 201–205 (EWGID) contacts substrate. Asp-223 (proton donor) is an active-site residue. N-linked (GlcNAc...) asparagine glycans are attached at residues Asn-438, Asn-450, Asn-484, Asn-551, and Asn-583.

The protein belongs to the glycosyl hydrolase 27 family.

It is found in the secreted. It catalyses the reaction Hydrolysis of terminal, non-reducing alpha-D-galactose residues in alpha-D-galactosides, including galactose oligosaccharides, galactomannans and galactolipids.. Its function is as follows. Hydrolyzes a variety of simple alpha-D-galactoside as well as more complex molecules such as oligosaccharides and polysaccharides. Active on paranitrophenyl-alpha-galactoside but not on raffinose, locust bean gum and gum guar. This chain is Alpha-galactosidase D (aglD), found in Emericella nidulans (strain FGSC A4 / ATCC 38163 / CBS 112.46 / NRRL 194 / M139) (Aspergillus nidulans).